A 247-amino-acid polypeptide reads, in one-letter code: Pyridoxine 5'-phosphate synthase (247 aa).

Asn-7 contacts 3-amino-2-oxopropyl phosphate. 9–10 contacts 1-deoxy-D-xylulose 5-phosphate; it reads DH. Arg-18 is a binding site for 3-amino-2-oxopropyl phosphate. The active-site Proton acceptor is the His-43. The 1-deoxy-D-xylulose 5-phosphate site is built by Arg-45 and His-50. Catalysis depends on Glu-70, which acts as the Proton acceptor. Residue Thr-100 participates in 1-deoxy-D-xylulose 5-phosphate binding. Residue His-190 is the Proton donor of the active site. 3-amino-2-oxopropyl phosphate-binding positions include Gly-191 and 212–213; that span reads GH.

This sequence belongs to the PNP synthase family. Homooctamer; tetramer of dimers.

Its subcellular location is the cytoplasm. The catalysed reaction is 3-amino-2-oxopropyl phosphate + 1-deoxy-D-xylulose 5-phosphate = pyridoxine 5'-phosphate + phosphate + 2 H2O + H(+). The protein operates within cofactor biosynthesis; pyridoxine 5'-phosphate biosynthesis; pyridoxine 5'-phosphate from D-erythrose 4-phosphate: step 5/5. Its function is as follows. Catalyzes the complicated ring closure reaction between the two acyclic compounds 1-deoxy-D-xylulose-5-phosphate (DXP) and 3-amino-2-oxopropyl phosphate (1-amino-acetone-3-phosphate or AAP) to form pyridoxine 5'-phosphate (PNP) and inorganic phosphate. This is Pyridoxine 5'-phosphate synthase from Synechococcus sp. (strain WH7803).